The following is a 483-amino-acid chain: Altronate oxidoreductase (483 aa).

Ile18–Ala29 provides a ligand contact to NAD(+).

Belongs to the mannitol dehydrogenase family. UxaB subfamily.

It carries out the reaction D-altronate + NAD(+) = keto-D-tagaturonate + NADH + H(+). It participates in carbohydrate metabolism; pentose and glucuronate interconversion. This is Altronate oxidoreductase from Escherichia coli O17:K52:H18 (strain UMN026 / ExPEC).